The primary structure comprises 1297 residues: DNA-directed RNA polymerase subunit beta' (1297 aa).

Positions 60, 62, 75, and 78 each coordinate Zn(2+). Mg(2+) is bound by residues D535, D537, and D539. C883, C961, C968, and C971 together coordinate Zn(2+).

The protein belongs to the RNA polymerase beta' chain family. As to quaternary structure, the RNAP catalytic core consists of 2 alpha, 1 beta, 1 beta' and 1 omega subunit. When a sigma factor is associated with the core the holoenzyme is formed, which can initiate transcription. Requires Mg(2+) as cofactor. Zn(2+) is required as a cofactor.

It carries out the reaction RNA(n) + a ribonucleoside 5'-triphosphate = RNA(n+1) + diphosphate. DNA-dependent RNA polymerase catalyzes the transcription of DNA into RNA using the four ribonucleoside triphosphates as substrates. In Salinispora tropica (strain ATCC BAA-916 / DSM 44818 / JCM 13857 / NBRC 105044 / CNB-440), this protein is DNA-directed RNA polymerase subunit beta'.